We begin with the raw amino-acid sequence, 1025 residues long: Multidrug resistance protein MdtC (1025 aa).

The next 12 membrane-spanning stretches (helical) occupy residues 3-23 (FFAL…AITL), 333-353 (EVEQ…FLFL), 360-380 (IIPA…MYLC), 387-407 (LSLM…IVVL), 431-451 (VGFT…PLLL), 463-483 (FAVT…TLTP), 528-548 (LVGV…ISIP), 853-873 (VILI…LYES), 875-895 (VHPL…LLAL), 897-917 (LFNA…IGIV), 953-973 (PIMM…LSGG), and 984-1004 (ITIV…TPVV).

It belongs to the resistance-nodulation-cell division (RND) (TC 2.A.6) family. MdtC subfamily. As to quaternary structure, part of a tripartite efflux system composed of MdtA, MdtB and MdtC. MdtC forms a heteromultimer with MdtB.

Its subcellular location is the cell inner membrane. In terms of biological role, the MdtABC tripartite complex confers resistance against novobiocin and deoxycholate. This Escherichia coli (strain K12 / MC4100 / BW2952) protein is Multidrug resistance protein MdtC.